Here is a 164-residue protein sequence, read N- to C-terminus: Hydroxylaminobenzene mutase HabB (164 aa).

Helical transmembrane passes span 16-36, 50-70, 78-98, and 121-141; these read LLQLGIALFLLGLLTGFLLPM, GVLNGMFLLALGLMWPQLSLG, FGFAVYGTYANWLATLLAGFW, and LIAFALISLSLSMLVVCALAL.

It is found in the cell membrane. The enzyme catalyses N-phenylhydroxylamine = 2-aminophenol. Addition of ZnSO(4) decreases the activity to 70%. In terms of biological role, catalyzes the rearrangement of hydroxylaminobenzene to 2-aminophenol. In Ectopseudomonas oleovorans (Pseudomonas oleovorans), this protein is Hydroxylaminobenzene mutase HabB (habB).